The sequence spans 468 residues: MRVLSVLLVALTVAGSAYSQCTVNDASSAQLDSTFGPTTGGDALTFNNNLGNQIQIANNYNFVSNGVVQSNGGDNLVLTGTLTPANSSLTDKFSLRAAFVRTTTPSDVKRELQAGAYTSNGGTVDPSTWSFYQILPDNTKMVSLTNPNTVVTMSENPNTALQVGVGANGKNLQNGASGWFQFKATDGSVSIQSGNGEMEVVDININLGCSSTFDCVSNTYTISKASIDKSLTDQQNDQALYVDQVSTVFGNQQRFDTSSGTVNTISIDQTNGNLRLGAGFTSISDSSITVNCDLRFSPALPSANYQPKLELMNSAYVSGGGSIDPNTWAYYTVNVSGSSCTRNDGTVVTITGDQDNMYLQWGKGANGKNGNFGLSVWLNYVDAALTNPFFDINVDTVCETNPSTNLPETSPPTEQPTAPPATCPPGCIPAIPVVNVTETPAAGNSASSIEMSKLVVAILSLFILAFFH.

A signal peptide spans M1–S19. N-linked (GlcNAc...) asparagine glycans are attached at residues N86 and N334. The disordered stretch occupies residues N401–A421. Residues T409 to A421 show a composition bias toward pro residues. An N-linked (GlcNAc...) asparagine glycan is attached at N435. N444 is lipidated: GPI-like-anchor amidated asparagine. Positions S445 to H468 are cleaved as a propeptide — removed in mature form.

The protein resides in the cell membrane. This is an uncharacterized protein from Dictyostelium discoideum (Social amoeba).